We begin with the raw amino-acid sequence, 503 residues long: Cytochrome P450 7A1 (503 aa).

A helical transmembrane segment spans residues 4 to 24 (ISLIWGIAVVVSCCIWFIIGI). Cys444 contacts heme.

The protein belongs to the cytochrome P450 family. The cofactor is heme.

Its subcellular location is the endoplasmic reticulum membrane. It localises to the microsome membrane. The enzyme catalyses cholesterol + reduced [NADPH--hemoprotein reductase] + O2 = 7alpha-hydroxycholesterol + oxidized [NADPH--hemoprotein reductase] + H2O + H(+). It catalyses the reaction 4beta-hydroxycholesterol + reduced [NADPH--hemoprotein reductase] + O2 = 4beta,7alpha-dihydroxycholesterol + oxidized [NADPH--hemoprotein reductase] + H2O + H(+). It carries out the reaction lathosterol + reduced [NADPH--hemoprotein reductase] + O2 = 7alpha,8alpha-epoxy-5alpha-cholestan-3beta-ol + oxidized [NADPH--hemoprotein reductase] + H2O + H(+). The catalysed reaction is lathosterol + reduced [NADPH--hemoprotein reductase] + O2 = 5alpha-cholestan-7-oxo-3beta-ol + oxidized [NADPH--hemoprotein reductase] + H2O + H(+). The enzyme catalyses 7-dehydrocholesterol + reduced [NADPH--hemoprotein reductase] + O2 = 7-oxocholesterol + oxidized [NADPH--hemoprotein reductase] + H2O + H(+). It catalyses the reaction (24S)-hydroxycholesterol + reduced [NADPH--hemoprotein reductase] + O2 = (24S)-7alpha-dihydroxycholesterol + oxidized [NADPH--hemoprotein reductase] + H2O + H(+). It carries out the reaction (24R)-hydroxycholesterol + reduced [NADPH--hemoprotein reductase] + O2 = (24R)-7alpha-dihydroxycholesterol + oxidized [NADPH--hemoprotein reductase] + H2O + H(+). Its pathway is lipid metabolism; bile acid biosynthesis. It functions in the pathway steroid metabolism; cholesterol degradation. A cytochrome P450 monooxygenase involved in the metabolism of endogenous cholesterol and its oxygenated derivatives (oxysterols). Mechanistically, uses molecular oxygen inserting one oxygen atom into a substrate, and reducing the second into a water molecule, with two electrons provided by NADPH via cytochrome P450 reductase (CPR; NADPH-ferrihemoprotein reductase). Functions as a critical regulatory enzyme of bile acid biosynthesis and cholesterol homeostasis. Catalyzes the hydroxylation of carbon hydrogen bond at 7-alpha position of cholesterol, a rate-limiting step in cholesterol catabolism and bile acid biosynthesis. 7-alpha hydroxylates several oxysterols, including 4beta-hydroxycholesterol and 24-hydroxycholesterol. Catalyzes the oxidation of the 7,8 double bond of 7-dehydrocholesterol and lathosterol with direct and predominant formation of the 7-keto derivatives. The protein is Cytochrome P450 7A1 of Mus musculus (Mouse).